Here is a 234-residue protein sequence, read N- to C-terminus: Sugar fermentation stimulation protein A (234 aa).

A DNA-binding region (H-T-H motif) is located at residues 201–220 (LLSEAQQRGVEILAYKAELS).

The protein belongs to the SfsA family.

Its function is as follows. Binds to DNA non-specifically. Could be a regulatory factor involved in maltose metabolism. The chain is Sugar fermentation stimulation protein A from Escherichia coli O127:H6 (strain E2348/69 / EPEC).